Consider the following 401-residue polypeptide: MELPIEEIKVRKVLDSRGNFTVEADVTVPNGFGRTSAPAGASTGETEVIAFSKSGIDASIQFFESKVKRSLIGFNALDQSGFDKLLTDIDGSGNFSNLGGNLATALSMSVAKAAAQSLGIPLYRYVGGIRSTIPRPMGNVIGGGKHARNGTSIQEFLVSAQGSTFLESAYINVLVHRRIGDMLSDKFKDISIGVGDERTWSVNLSDEEAFEILNEAVKEISSEKKVKIYTGVDFAADSLYENGKYVYKHTTKSRDEQIDYAISISKDFGVYYIEDPMYDTDFDGFAEITARIGDRSLIVGDDLYTTNPDRIRKGVEKKSTNAVLIKVNQIGTLSAAREAVAVATFAGMKNIVSHRSGETTDDFLAHLSVAFGSTFVKTGVIGGERVAKLNEIARIEECLTS.

(2R)-2-phosphoglycerate is bound at residue Gln154. The Proton donor role is filled by Glu197. Residues Asp233, Glu274, and Asp301 each coordinate Mg(2+). (2R)-2-phosphoglycerate contacts are provided by Lys326, Arg355, Ser356, and Lys377. Lys326 (proton acceptor) is an active-site residue.

It belongs to the enolase family. Requires Mg(2+) as cofactor.

The protein resides in the cytoplasm. Its subcellular location is the secreted. The protein localises to the cell surface. The catalysed reaction is (2R)-2-phosphoglycerate = phosphoenolpyruvate + H2O. The protein operates within carbohydrate degradation; glycolysis; pyruvate from D-glyceraldehyde 3-phosphate: step 4/5. In terms of biological role, catalyzes the reversible conversion of 2-phosphoglycerate (2-PG) into phosphoenolpyruvate (PEP). It is essential for the degradation of carbohydrates via glycolysis. In Thermoplasma acidophilum (strain ATCC 25905 / DSM 1728 / JCM 9062 / NBRC 15155 / AMRC-C165), this protein is Enolase.